The sequence spans 95 residues: uncharacterized protein (95 aa).

This sequence belongs to the inositol monophosphatase superfamily.

This is an uncharacterized protein from Rhizobium leguminosarum bv. phaseoli.